Reading from the N-terminus, the 217-residue chain is 3,4-dihydroxy-2-butanone 4-phosphate synthase (217 aa).

D-ribulose 5-phosphate-binding positions include 37–38 (RE), Asp42, 150–154 (RRGHT), and Glu174. Glu38 lines the Mg(2+) pocket. His153 is a binding site for Mg(2+).

This sequence belongs to the DHBP synthase family. As to quaternary structure, homodimer. Requires Mg(2+) as cofactor. Mn(2+) is required as a cofactor.

The enzyme catalyses D-ribulose 5-phosphate = (2S)-2-hydroxy-3-oxobutyl phosphate + formate + H(+). It participates in cofactor biosynthesis; riboflavin biosynthesis; 2-hydroxy-3-oxobutyl phosphate from D-ribulose 5-phosphate: step 1/1. Catalyzes the conversion of D-ribulose 5-phosphate to formate and 3,4-dihydroxy-2-butanone 4-phosphate. The polypeptide is 3,4-dihydroxy-2-butanone 4-phosphate synthase (Serratia proteamaculans (strain 568)).